Here is a 557-residue protein sequence, read N- to C-terminus: Putative UDP-glucuronate:xylan alpha-glucuronosyltransferase 4 (557 aa).

Residues 11 to 31 form a helical; Signal-anchor for type II membrane protein membrane-spanning segment; it reads KIFMIYLILVSLSLLGLILPF. Residues aspartate 365 and aspartate 367 each contribute to the Mn(2+) site. Substrate-binding positions include 365 to 367, 394 to 396, 421 to 425, and 466 to 471; these read DAD, NSG, NGGDQ, and HYLGLK. Histidine 466 lines the Mn(2+) pocket.

Belongs to the glycosyltransferase 8 family. Glycogenin subfamily. The cofactor is Mn(2+).

The protein resides in the golgi apparatus membrane. Functionally, may be involved in the substitutions of the xylan backbone in stem glucuronoxylan. The polypeptide is Putative UDP-glucuronate:xylan alpha-glucuronosyltransferase 4 (GUX4) (Arabidopsis thaliana (Mouse-ear cress)).